We begin with the raw amino-acid sequence, 671 residues long: Putative ubiquitin thioesterase 232R (671 aa).

4 disordered regions span residues glutamate 36–serine 62, serine 100–glutamine 123, asparagine 171–phenylalanine 203, and glutamate 250–serine 319. Over residues proline 110 to glutamine 123 the composition is skewed to low complexity. Positions arginine 182–arginine 200 are enriched in pro residues. Low complexity predominate over residues serine 255–lysine 271. Residues proline 272–serine 319 show a composition bias toward basic residues. Positions phenylalanine 392–phenylalanine 521 constitute an OTU domain. The active site involves aspartate 400. Cysteine 403 acts as the Nucleophile in catalysis. The active site involves histidine 514. Positions lysine 589–proline 625 are disordered.

The enzyme catalyses Thiol-dependent hydrolysis of ester, thioester, amide, peptide and isopeptide bonds formed by the C-terminal Gly of ubiquitin (a 76-residue protein attached to proteins as an intracellular targeting signal).. Its function is as follows. Hydrolase that can remove conjugated ubiquitin from proteins and may therefore play an important regulatory role at the level of protein turnover by preventing degradation. The sequence is that of Putative ubiquitin thioesterase 232R from Acheta domesticus (House cricket).